We begin with the raw amino-acid sequence, 429 residues long: Cell wall protein ECM33 (429 aa).

Positions 1-19 (MQFKNALTATAILSASALA) are cleaved as a signal peptide. 12 N-linked (GlcNAc...) asparagine glycosylation sites follow: asparagine 21, asparagine 56, asparagine 82, asparagine 196, asparagine 209, asparagine 227, asparagine 234, asparagine 241, asparagine 267, asparagine 279, asparagine 304, and asparagine 328. Serine 339 carries the post-translational modification Phosphoserine. Residues 361-401 (LSSTSTESSKSSATSSASSSGDASNAQANVSASASSSSSSS) are compositionally biased toward low complexity. Residues 361–410 (LSSTSTESSKSSATSSASSSGDASNAQANVSASASSSSSSSKKSKGAAPE) form a disordered region. N-linked (GlcNAc...) asparagine glycosylation is present at asparagine 389. A lipid anchor (GPI-anchor amidated glycine) is attached at glycine 406. Positions 407 to 429 (AAPELVPATSFMGVVAAVGVALL) are cleaved as a propeptide — removed in mature form.

The protein belongs to the SPS2 family. In terms of processing, the GPI-anchor is attached to the protein in the endoplasmic reticulum and serves to target the protein to the cell surface. There, the glucosamine-inositol phospholipid moiety is cleaved off and the GPI-modified mannoprotein is covalently attached via its lipidless GPI glycan remnant to the 1,6-beta-glucan of the outer cell wall layer. Post-translationally, extensively N-glycosylated.

The protein resides in the cell membrane. Its subcellular location is the secreted. The protein localises to the cell wall. Its function is as follows. Required for proper cell wall integrity and for the correct assembly of the mannoprotein outer layer of the cell wall. Important for apical bud growth. In Saccharomyces cerevisiae (strain ATCC 204508 / S288c) (Baker's yeast), this protein is Cell wall protein ECM33 (ECM33).